Consider the following 621-residue polypeptide: Chaperone protein HscA homolog (621 aa).

The protein belongs to the heat shock protein 70 family.

Functionally, chaperone involved in the maturation of iron-sulfur cluster-containing proteins. Has a low intrinsic ATPase activity which is markedly stimulated by HscB. The polypeptide is Chaperone protein HscA homolog (Cupriavidus metallidurans (strain ATCC 43123 / DSM 2839 / NBRC 102507 / CH34) (Ralstonia metallidurans)).